The sequence spans 148 residues: 3-dehydroquinate dehydratase (148 aa).

Tyr-22 functions as the Proton acceptor in the catalytic mechanism. Asn-73, His-79, and Asp-86 together coordinate substrate. The active-site Proton donor is His-99. Residues 100-101 (LS) and Arg-110 contribute to the substrate site.

The protein belongs to the type-II 3-dehydroquinase family. In terms of assembly, homododecamer.

It catalyses the reaction 3-dehydroquinate = 3-dehydroshikimate + H2O. Its pathway is metabolic intermediate biosynthesis; chorismate biosynthesis; chorismate from D-erythrose 4-phosphate and phosphoenolpyruvate: step 3/7. Catalyzes a trans-dehydration via an enolate intermediate. This is 3-dehydroquinate dehydratase from Jannaschia sp. (strain CCS1).